The following is a 208-amino-acid chain: Protein GrpE (208 aa).

Residues 1–12 (MTNKDESVEKNT) show a composition bias toward basic and acidic residues. A disordered region spans residues 1-49 (MTNKDESVEKNTESTVEVTNVKQNIDDSVEQTEESKGHLQDEAIEETSD). Residues 13 to 23 (ESTVEVTNVKQ) are compositionally biased toward polar residues.

This sequence belongs to the GrpE family. Homodimer.

Its subcellular location is the cytoplasm. Its function is as follows. Participates actively in the response to hyperosmotic and heat shock by preventing the aggregation of stress-denatured proteins, in association with DnaK and GrpE. It is the nucleotide exchange factor for DnaK and may function as a thermosensor. Unfolded proteins bind initially to DnaJ; upon interaction with the DnaJ-bound protein, DnaK hydrolyzes its bound ATP, resulting in the formation of a stable complex. GrpE releases ADP from DnaK; ATP binding to DnaK triggers the release of the substrate protein, thus completing the reaction cycle. Several rounds of ATP-dependent interactions between DnaJ, DnaK and GrpE are required for fully efficient folding. This is Protein GrpE from Staphylococcus aureus (strain bovine RF122 / ET3-1).